Reading from the N-terminus, the 373-residue chain is NAD-dependent protein deacetylase SIR2rp1 (373 aa).

In terms of domain architecture, Deacetylase sirtuin-type spans 12–349; the sequence is HALGEPTVEG…LKLAECLGLR (338 aa). NAD(+)-binding positions include 39-59 and 124-127; these read GAGASVAAGIPDFRSSDTGIY and QNID. His144 acts as the Proton acceptor in catalysis. Residues Cys152, Cys155, Cys176, and Cys179 each coordinate Zn(2+). NAD(+) is bound by residues 216–218 and 241–243; these read GTS and NRE. The segment at 263–313 is disordered; it reads DAVAKEGRSSSSQSRSPSASARREEGGTEDGSSSPNEEVEDASTSSSSDGY. Over residues 271–282 the composition is skewed to low complexity; sequence SSSSQSRSPSAS. NAD(+) is bound at residue Cys335.

The protein belongs to the sirtuin family. Class I subfamily. Requires Zn(2+) as cofactor.

The protein resides in the nucleus. It carries out the reaction N(6)-acetyl-L-lysyl-[protein] + NAD(+) + H2O = 2''-O-acetyl-ADP-D-ribose + nicotinamide + L-lysyl-[protein]. Its function is as follows. NAD-dependent deacetylase, which probably acts as a regulator of gene expression believed to help form modified chromatin structures on the genes it regulates. In Leishmania major, this protein is NAD-dependent protein deacetylase SIR2rp1 (SIR2rp1).